The following is a 391-amino-acid chain: Multidrug resistance protein MdtL (391 aa).

The next 12 helical transmembrane spans lie at 4–24 (FLIC…MYLV), 42–62 (IAFS…GKVA), 69–89 (PVAI…SLAE), 93–113 (LFLA…VVAF), 131–151 (LLNG…HLIM), 158–178 (SLFW…LFIL), 203–222 (FFLS…LTFV), 245–265 (ALTA…LGIF), 269–289 (TLMI…AVSP), 293–313 (VSLF…GVAM), 331–351 (LGIA…VVGI), and 356–376 (MLIG…MFVA).

Belongs to the major facilitator superfamily. DHA1 family. MdtL (TC 2.A.1.2.22) subfamily.

Its subcellular location is the cell inner membrane. Functionally, confers resistance to chloramphenicol. The chain is Multidrug resistance protein MdtL from Escherichia coli O127:H6 (strain E2348/69 / EPEC).